The chain runs to 185 residues: Transcription antitermination protein NusB (185 aa).

Belongs to the NusB family.

Involved in transcription antitermination. Required for transcription of ribosomal RNA (rRNA) genes. Binds specifically to the boxA antiterminator sequence of the ribosomal RNA (rrn) operons. The protein is Transcription antitermination protein NusB of Rhodospirillum rubrum (strain ATCC 11170 / ATH 1.1.1 / DSM 467 / LMG 4362 / NCIMB 8255 / S1).